The primary structure comprises 80 residues: DNA-binding protein HU-like (80 aa).

It belongs to the bacterial histone-like protein family.

In terms of biological role, histone-like DNA-binding protein which is capable of wrapping DNA to stabilize it, and thus to prevent its denaturation under extreme environmental conditions. The chain is DNA-binding protein HU-like from Rickettsia prowazekii (strain Madrid E).